We begin with the raw amino-acid sequence, 180 residues long: Large ribosomal subunit protein uL10 (180 aa).

The protein belongs to the universal ribosomal protein uL10 family. As to quaternary structure, part of the ribosomal stalk of the 50S ribosomal subunit. The N-terminus interacts with L11 and the large rRNA to form the base of the stalk. The C-terminus forms an elongated spine to which L12 dimers bind in a sequential fashion forming a multimeric L10(L12)X complex.

Its function is as follows. Forms part of the ribosomal stalk, playing a central role in the interaction of the ribosome with GTP-bound translation factors. This chain is Large ribosomal subunit protein uL10, found in Thermosipho africanus (strain TCF52B).